Consider the following 250-residue polypeptide: Cobalt transport protein CbiM (250 aa).

A signal peptide spans 1 to 25 (MKQNIKLGVIAALMLIVLTPVTSNA). 6 consecutive transmembrane segments (helical) span residues 33-53 (LPVK…LVGL), 68-88 (VLLA…IPSV), 100-120 (LGAI…VLIF), 132-152 (TLGA…FLIF), 163-183 (AMPV…VTSI), and 205-225 (GIFF…TVIV).

This sequence belongs to the CbiM family. Forms an energy-coupling factor (ECF) transporter complex composed of an ATP-binding protein (A component, CbiO), a transmembrane protein (T component, CbiQ) and 2 possible substrate-capture proteins (S components, CbiM and CbiN) of unknown stoichimetry.

The protein resides in the cell membrane. Its pathway is cofactor biosynthesis; adenosylcobalamin biosynthesis. Its function is as follows. Part of the energy-coupling factor (ECF) transporter complex CbiMNOQ involved in cobalt import. The polypeptide is Cobalt transport protein CbiM (Clostridioides difficile (strain R20291) (Peptoclostridium difficile)).